The chain runs to 515 residues: Protein translocase subunit SecD (515 aa).

The helical transmembrane segment at Leu-6–Gly-26 threads the bilayer. Residues Ala-141–Asp-186 form a disordered region. The segment covering Asn-150 to Pro-169 has biased composition (low complexity). Residues Gln-170–Asp-186 show a composition bias toward polar residues. The next 5 helical transmembrane spans lie at Arg-322–Tyr-342, Leu-344–Phe-364, Ile-367–Val-387, Ile-427–Val-447, and Gly-450–Thr-470.

The protein belongs to the SecD/SecF family. SecD subfamily. Forms a complex with SecF. Part of the essential Sec protein translocation apparatus which comprises SecA, SecYEG and auxiliary proteins SecDF. Other proteins may also be involved.

Its subcellular location is the cell membrane. In terms of biological role, part of the Sec protein translocase complex. Interacts with the SecYEG preprotein conducting channel. SecDF uses the proton motive force (PMF) to complete protein translocation after the ATP-dependent function of SecA. In Thermobaculum terrenum (strain ATCC BAA-798 / CCMEE 7001 / YNP1), this protein is Protein translocase subunit SecD.